A 330-amino-acid polypeptide reads, in one-letter code: Glycerol-3-phosphate dehydrogenase [NAD(P)+] (330 aa).

Residues Trp11, Arg33, and Lys105 each contribute to the NADPH site. Sn-glycerol 3-phosphate is bound by residues Lys105, Gly133, and Ser135. Ala137 contacts NADPH. Sn-glycerol 3-phosphate is bound by residues Lys188, Asp241, Ser251, Arg252, and Asn253. Catalysis depends on Lys188, which acts as the Proton acceptor. Residue Arg252 participates in NADPH binding. Residues Val276 and Glu278 each coordinate NADPH.

It belongs to the NAD-dependent glycerol-3-phosphate dehydrogenase family.

It is found in the cytoplasm. It carries out the reaction sn-glycerol 3-phosphate + NAD(+) = dihydroxyacetone phosphate + NADH + H(+). The enzyme catalyses sn-glycerol 3-phosphate + NADP(+) = dihydroxyacetone phosphate + NADPH + H(+). It functions in the pathway membrane lipid metabolism; glycerophospholipid metabolism. Its function is as follows. Catalyzes the reduction of the glycolytic intermediate dihydroxyacetone phosphate (DHAP) to sn-glycerol 3-phosphate (G3P), the key precursor for phospholipid synthesis. This Acidovorax sp. (strain JS42) protein is Glycerol-3-phosphate dehydrogenase [NAD(P)+].